A 311-amino-acid chain; its full sequence is Ribosomal RNA small subunit methyltransferase H 1 (311 aa).

Residues 33–35, Asp-53, Phe-80, Asp-101, and Gln-108 contribute to the S-adenosyl-L-methionine site; that span reads AGH.

The protein belongs to the methyltransferase superfamily. RsmH family.

It is found in the cytoplasm. The catalysed reaction is cytidine(1402) in 16S rRNA + S-adenosyl-L-methionine = N(4)-methylcytidine(1402) in 16S rRNA + S-adenosyl-L-homocysteine + H(+). Functionally, specifically methylates the N4 position of cytidine in position 1402 (C1402) of 16S rRNA. The chain is Ribosomal RNA small subunit methyltransferase H 1 from Alkaliphilus metalliredigens (strain QYMF).